Consider the following 222-residue polypeptide: Glutathione S-transferase alpha-2 (222 aa).

A GST N-terminal domain is found at 3 to 83 (GKPVLHYFNA…YIATKYDLYG (81 aa)). Position 4 is an N6-succinyllysine (Lys-4). Glutathione-binding positions include Tyr-9, Lys-45, 54–55 (QV), and 67–68 (QT). The region spanning 85-208 (DMKERALIDM…QPGSQRKPAM (124 aa)) is the GST C-terminal domain.

This sequence belongs to the GST superfamily. Alpha family. In terms of assembly, homodimer or heterodimer of GSTA1 and GSTA2.

The protein localises to the cytoplasm. It carries out the reaction RX + glutathione = an S-substituted glutathione + a halide anion + H(+). In terms of biological role, catalyzes the conjugation of glutathione to a large variety of electrophilic compounds. This is Glutathione S-transferase alpha-2 (Gsta2) from Rattus norvegicus (Rat).